The primary structure comprises 335 residues: Serpentine receptor class alpha-13 (335 aa).

The Extracellular segment spans residues 1-25 (MAIISSVNRTCASESLLELYRSYKY). The helical transmembrane segment at 26-46 (ILSTSFNIIIPIISLFFLVYA) threads the bilayer. At 47-61 (IKQLCAQSIIQYSTR) the chain is on the cytoplasmic side. The chain crosses the membrane as a helical span at residues 62-82 (VLLITTILFAVCHQIAYFCFK). At 83-108 (ADLLYTMLFKLDQPCNLQHSSYDCRF) the chain is on the extracellular side. A helical membrane pass occupies residues 109 to 129 (ITIATTTSNCGMALVQLAMSI). Topologically, residues 130-146 (DRVFALKFNRVYYKLKS) are cytoplasmic. Residues 147 to 167 (IPGITLALITLSISFSMFFIL) traverse the membrane as a helical segment. The Extracellular segment spans residues 168–192 (TIDDPLSGYVNHCGFYPTYSQDKFH). A helical transmembrane segment spans residues 193–213 (IFLDVTLYLAVFNFVFDIGLM). Topologically, residues 214-243 (YYSYQEILWKRSYSFVNRFQSRISLKCTQA) are cytoplasmic. The chain crosses the membrane as a helical span at residues 244–264 (IFIISICQCISNVLYSGLLSL). At 265-278 (LMKLGRYMSSADYN) the chain is on the extracellular side. The helical transmembrane segment at 279–299 (LSLSLAYTTPYSCLILPILIC) threads the bilayer. At 300–335 (KVLEYIKKQRTVGILSLRNQKQSMEGHMAMINSAWK) the chain is on the cytoplasmic side.

Belongs to the nematode receptor-like protein sra family. In terms of tissue distribution, expressed in the AWA and AWC chemosensory neurons.

Its subcellular location is the membrane. In terms of biological role, chemosensory receptor that negatively regulates RAS/MAPK signaling during vulva induction and the negative regulation of olfaction of volitile attractants. Required for the suppression of vulval induction in response to food starvation. Signaling acts through the GPA-5 G-alpha protein subunit. The sequence is that of Serpentine receptor class alpha-13 (sra-13) from Caenorhabditis elegans.